The sequence spans 151 residues: 3-dehydroquinate dehydratase (151 aa).

Y24 acts as the Proton acceptor in catalysis. Residues N76, H82, and D89 each contribute to the substrate site. H102 acts as the Proton donor in catalysis. Substrate is bound by residues 103-104 (VS) and R113.

Belongs to the type-II 3-dehydroquinase family. In terms of assembly, homododecamer.

It carries out the reaction 3-dehydroquinate = 3-dehydroshikimate + H2O. It participates in metabolic intermediate biosynthesis; chorismate biosynthesis; chorismate from D-erythrose 4-phosphate and phosphoenolpyruvate: step 3/7. Its function is as follows. Catalyzes a trans-dehydration via an enolate intermediate. This chain is 3-dehydroquinate dehydratase, found in Rhodopseudomonas palustris (strain BisA53).